A 328-amino-acid chain; its full sequence is Malate dehydrogenase (328 aa).

12–18 (GAAGQIA) serves as a coordination point for NAD(+). Substrate contacts are provided by Arg-93 and Arg-99. NAD(+) is bound by residues Asn-106, Gln-113, and 130 to 132 (VGN). 2 residues coordinate substrate: Asn-132 and Arg-163. Catalysis depends on His-188, which acts as the Proton acceptor.

It belongs to the LDH/MDH superfamily. MDH type 2 family.

It catalyses the reaction (S)-malate + NAD(+) = oxaloacetate + NADH + H(+). In terms of biological role, catalyzes the reversible oxidation of malate to oxaloacetate. The sequence is that of Malate dehydrogenase from Burkholderia cenocepacia (strain HI2424).